Consider the following 1240-residue polypeptide: ABC transporter B family member 15 (1240 aa).

Transmembrane regions (helical) follow at residues 35 to 55, 82 to 102, 158 to 180, 184 to 206, 264 to 284, and 296 to 316; these read MGLG…VLLI, VALL…GYCW, LPNF…ILLW, IVGL…ALIS, GITI…SWYG, and GTVF…GGGL. The 290-residue stretch at 35–324 folds into the ABC transmembrane type-1 1 domain; the sequence is MGLGLIGAVG…GLSNLKYFFE (290 aa). Positions 359 to 595 constitute an ABC transporter 1 domain; sequence VEFKNVKFVY…IDGQYSTLVH (237 aa). 394–401 serves as a coordination point for ATP; sequence GGSGSGKS. Residues Asn-542, Asn-605, and Asn-622 are each glycosylated (N-linked (GlcNAc...) asparagine). The disordered stretch occupies residues 617–646; that stretch reads SKDIRNSSRVSTLSRSSSANSVTGPSTIKN. The segment covering 623–639 has biased composition (low complexity); it reads SSRVSTLSRSSSANSVT. Residue Asn-646 is glycosylated (N-linked (GlcNAc...) asparagine). One can recognise an ABC transmembrane type-1 2 domain in the interval 672 to 960; it reads ALYGCISATL…AGSMTTDLAK (289 aa). A run of 2 helical transmembrane segments spans residues 681-701 and 714-734; these read LFGA…SVYF and IYAL…ISQH. N-linked (GlcNAc...) asparagine glycosylation occurs at Asn-769. The next 4 helical transmembrane spans lie at 794–813, 817–839, 895–915, and 923–943; these read ALVV…GLVI, LALV…RVLL, SWFA…TWAL, and LIQD…ILVS. The region spanning 995-1233 is the ABC transporter 2 domain; it reads VEFLDVDFSY…GPTGIYFSLV (239 aa). Asn-1015 carries N-linked (GlcNAc...) asparagine glycosylation. An ATP-binding site is contributed by 1030–1037; it reads GPSGSGKS.

Belongs to the ABC transporter superfamily. ABCB family. Multidrug resistance exporter (TC 3.A.1.201) subfamily.

Its subcellular location is the membrane. This is ABC transporter B family member 15 (ABCB15) from Arabidopsis thaliana (Mouse-ear cress).